The chain runs to 245 residues: Probable transcriptional regulatory protein pc1328 (245 aa).

This sequence belongs to the TACO1 family.

The protein resides in the cytoplasm. In Protochlamydia amoebophila (strain UWE25), this protein is Probable transcriptional regulatory protein pc1328.